We begin with the raw amino-acid sequence, 322 residues long: ATP-dependent 6-phosphofructokinase (322 aa).

Glycine 11 contributes to the ATP binding site. Residue 21–25 (RAVTR) participates in ADP binding. ATP-binding positions include 72–73 (RC) and 102–105 (GDGS). Aspartate 103 lines the Mg(2+) pocket. Substrate is bound at residue 127 to 129 (TID). Aspartate 129 serves as the catalytic Proton acceptor. Residue arginine 156 participates in ADP binding. Substrate contacts are provided by residues arginine 164 and 171-173 (MGR). ADP is bound by residues 187–189 (GAE), arginine 213, and 215–217 (KKH). Residues glutamate 224, arginine 245, and 251 to 254 (HIQR) contribute to the substrate site.

The protein belongs to the phosphofructokinase type A (PFKA) family. ATP-dependent PFK group I subfamily. Prokaryotic clade 'B1' sub-subfamily. In terms of assembly, homotetramer. Mg(2+) serves as cofactor.

Its subcellular location is the cytoplasm. The enzyme catalyses beta-D-fructose 6-phosphate + ATP = beta-D-fructose 1,6-bisphosphate + ADP + H(+). Its pathway is carbohydrate degradation; glycolysis; D-glyceraldehyde 3-phosphate and glycerone phosphate from D-glucose: step 3/4. Allosterically activated by ADP and other diphosphonucleosides, and allosterically inhibited by phosphoenolpyruvate. Functionally, catalyzes the phosphorylation of D-fructose 6-phosphate to fructose 1,6-bisphosphate by ATP, the first committing step of glycolysis. This is ATP-dependent 6-phosphofructokinase from Staphylococcus epidermidis (strain ATCC 35984 / DSM 28319 / BCRC 17069 / CCUG 31568 / BM 3577 / RP62A).